The chain runs to 179 residues: ATP synthase subunit delta (179 aa).

Belongs to the ATPase delta chain family. As to quaternary structure, F-type ATPases have 2 components, F(1) - the catalytic core - and F(0) - the membrane proton channel. F(1) has five subunits: alpha(3), beta(3), gamma(1), delta(1), epsilon(1). F(0) has three main subunits: a(1), b(2) and c(10-14). The alpha and beta chains form an alternating ring which encloses part of the gamma chain. F(1) is attached to F(0) by a central stalk formed by the gamma and epsilon chains, while a peripheral stalk is formed by the delta and b chains.

It is found in the cell inner membrane. In terms of biological role, f(1)F(0) ATP synthase produces ATP from ADP in the presence of a proton or sodium gradient. F-type ATPases consist of two structural domains, F(1) containing the extramembraneous catalytic core and F(0) containing the membrane proton channel, linked together by a central stalk and a peripheral stalk. During catalysis, ATP synthesis in the catalytic domain of F(1) is coupled via a rotary mechanism of the central stalk subunits to proton translocation. Functionally, this protein is part of the stalk that links CF(0) to CF(1). It either transmits conformational changes from CF(0) to CF(1) or is implicated in proton conduction. The polypeptide is ATP synthase subunit delta (Acidithiobacillus ferridurans).